The chain runs to 188 residues: Holliday junction branch migration complex subunit RuvA (188 aa).

Residues 1 to 64 are domain I; the sequence is MIAGISGRVL…QDGITLYGFS (64 aa). The segment at 65–143 is domain II; it reads NEMKKELFLS…SAGIKDMRIY (79 aa). Residue tyrosine 143 is a region of interest, flexible linker. A domain III region spans residues 143-186; that stretch reads YHESLEALVSLGYPEKQAREAVKQVYREGMKTSELIKEALKFLS.

This sequence belongs to the RuvA family. In terms of assembly, homotetramer. Forms an RuvA(8)-RuvB(12)-Holliday junction (HJ) complex. HJ DNA is sandwiched between 2 RuvA tetramers; dsDNA enters through RuvA and exits via RuvB. An RuvB hexamer assembles on each DNA strand where it exits the tetramer. Each RuvB hexamer is contacted by two RuvA subunits (via domain III) on 2 adjacent RuvB subunits; this complex drives branch migration. In the full resolvosome a probable DNA-RuvA(4)-RuvB(12)-RuvC(2) complex forms which resolves the HJ.

Its subcellular location is the cytoplasm. The RuvA-RuvB-RuvC complex processes Holliday junction (HJ) DNA during genetic recombination and DNA repair, while the RuvA-RuvB complex plays an important role in the rescue of blocked DNA replication forks via replication fork reversal (RFR). RuvA specifically binds to HJ cruciform DNA, conferring on it an open structure. The RuvB hexamer acts as an ATP-dependent pump, pulling dsDNA into and through the RuvAB complex. HJ branch migration allows RuvC to scan DNA until it finds its consensus sequence, where it cleaves and resolves the cruciform DNA. Promotes Holliday junction (HJ) branch migration in conjunction with RuvB. The protein is Holliday junction branch migration complex subunit RuvA of Thermotoga maritima (strain ATCC 43589 / DSM 3109 / JCM 10099 / NBRC 100826 / MSB8).